Consider the following 156-residue polypeptide: Snaclec alboaggregin-B subunit alpha (156 aa).

An N-terminal signal peptide occupies residues 1 to 23 (MGRFIFVSFGLLVVFLSLSGTGA). One can recognise a C-type lectin domain in the interval 24–151 (DCPSDWSSFK…CEQKHIFMCK (128 aa)). 3 cysteine pairs are disulfide-bonded: Cys-25-Cys-36, Cys-53-Cys-150, and Cys-125-Cys-142.

Belongs to the snaclec family. As to quaternary structure, heterodimer of subunits alpha and beta; disulfide-linked. As to expression, expressed by the venom gland.

The protein resides in the secreted. Weakly agglutinates platelets at high doses by binding to GPIbalpha (GP1BA). This is Snaclec alboaggregin-B subunit alpha from Trimeresurus albolabris (White-lipped pit viper).